Consider the following 991-residue polypeptide: Polyribonucleotide nucleotidyltransferase 2, mitochondrial (991 aa).

Residues 1–39 (MSSIVNRASSASLPNFLAWRALGFRTICSGRLGFAPSVP) constitute a mitochondrion transit peptide. The region spanning 609–667 (PRLATLKYSNDSLRTLIGPMGVLKRKIEVETGARLSIDNGTLTIVAKNQDVMEKAQEQV) is the KH domain. Residues 678–746 (GGVYKGTVSS…VRGNIKLSRK (69 aa)) form the S1 motif 1 domain. The disordered stretch occupies residues 813–865 (EAEKSSPVNDNDKPRRAATSKPDRKPKSTASKLIATQKEEEALESIAPEETSA). The span at 822 to 838 (DNDKPRRAATSKPDRKP) shows a compositional bias: basic and acidic residues. The 63-residue stretch at 925–987 (GTEMTATVDH…GVPVMALVDE (63 aa)) folds into the S1 motif 2 domain.

This sequence belongs to the polyribonucleotide nucleotidyltransferase family.

The protein resides in the mitochondrion. It carries out the reaction RNA(n+1) + phosphate = RNA(n) + a ribonucleoside 5'-diphosphate. Involved in the 3'-end maturation of mitochondrial mRNAs, rRNAs and tRNAs. Functions as a poly(A) mRNA 3'-5' degrading phosphorylase and is required for the degradation of highly expressed transcripts of non-coding regions. This chain is Polyribonucleotide nucleotidyltransferase 2, mitochondrial (PNP2), found in Arabidopsis thaliana (Mouse-ear cress).